The sequence spans 33 residues: Lysozyme C, spleen isozyme (33 aa).

Belongs to the glycosyl hydrolase 22 family. In terms of assembly, monomer.

It carries out the reaction Hydrolysis of (1-&gt;4)-beta-linkages between N-acetylmuramic acid and N-acetyl-D-glucosamine residues in a peptidoglycan and between N-acetyl-D-glucosamine residues in chitodextrins.. Lysozymes have primarily a bacteriolytic function; those in tissues and body fluids are associated with the monocyte-macrophage system and enhance the activity of immunoagents. The polypeptide is Lysozyme C, spleen isozyme (Equus caballus (Horse)).